The chain runs to 174 residues: Adenine phosphoribosyltransferase (174 aa).

It belongs to the purine/pyrimidine phosphoribosyltransferase family. In terms of assembly, homodimer.

It is found in the cytoplasm. The enzyme catalyses AMP + diphosphate = 5-phospho-alpha-D-ribose 1-diphosphate + adenine. It functions in the pathway purine metabolism; AMP biosynthesis via salvage pathway; AMP from adenine: step 1/1. In terms of biological role, catalyzes a salvage reaction resulting in the formation of AMP, that is energically less costly than de novo synthesis. The chain is Adenine phosphoribosyltransferase from Nitrosomonas eutropha (strain DSM 101675 / C91 / Nm57).